Reading from the N-terminus, the 225-residue chain is Phosphatidylserine decarboxylase proenzyme (225 aa).

Catalysis depends on serine 195, which acts as the Schiff-base intermediate with substrate; via pyruvic acid. Serine 195 bears the Pyruvic acid (Ser); by autocatalysis mark.

It belongs to the phosphatidylserine decarboxylase family. PSD-A subfamily. In terms of assembly, heterodimer of a large membrane-associated beta subunit and a small pyruvoyl-containing alpha subunit. Requires pyruvate as cofactor. Post-translationally, is synthesized initially as an inactive proenzyme. Formation of the active enzyme involves a self-maturation process in which the active site pyruvoyl group is generated from an internal serine residue via an autocatalytic post-translational modification. Two non-identical subunits are generated from the proenzyme in this reaction, and the pyruvate is formed at the N-terminus of the alpha chain, which is derived from the carboxyl end of the proenzyme. The post-translation cleavage follows an unusual pathway, termed non-hydrolytic serinolysis, in which the side chain hydroxyl group of the serine supplies its oxygen atom to form the C-terminus of the beta chain, while the remainder of the serine residue undergoes an oxidative deamination to produce ammonia and the pyruvoyl prosthetic group on the alpha chain.

The protein localises to the cell membrane. The catalysed reaction is a 1,2-diacyl-sn-glycero-3-phospho-L-serine + H(+) = a 1,2-diacyl-sn-glycero-3-phosphoethanolamine + CO2. It participates in phospholipid metabolism; phosphatidylethanolamine biosynthesis; phosphatidylethanolamine from CDP-diacylglycerol: step 2/2. Its function is as follows. Catalyzes the formation of phosphatidylethanolamine (PtdEtn) from phosphatidylserine (PtdSer). The sequence is that of Phosphatidylserine decarboxylase proenzyme from Gluconobacter oxydans (strain 621H) (Gluconobacter suboxydans).